Here is an 836-residue protein sequence, read N- to C-terminus: V-type proton ATPase subunit C (836 aa).

The span at 116–144 (LSLRHQRKHQHTHHQNKPQHYHHHHHHHQ) shows a compositional bias: basic residues. Disordered stretches follow at residues 116–169 (LSLR…ASAP), 302–403 (APTT…SVQS), 415–453 (KPKRNSKKSSAQQQHETAQLQHQQTTQQHATPLTPQNHN), and 496–544 (PSQL…PLSP). Positions 160–169 (ATPPAPASAP) are enriched in pro residues. Residues 302 to 316 (APTTSSSVHSSMSRS) show a composition bias toward low complexity. 2 stretches are compositionally biased toward polar residues: residues 319 to 348 (KRLNNNTCSINNNKLSFRSGSHVSQLHLAT) and 364 to 374 (TNPLQSPVQKS). The span at 425–450 (AQQQHETAQLQHQQTTQQHATPLTPQ) shows a compositional bias: low complexity. Polar residues predominate over residues 496–511 (PSQLNINNGFNLTPTH). Low complexity predominate over residues 512 to 529 (RSSPVSSCCGSSSQGRSS).

This sequence belongs to the V-ATPase C subunit family. V-ATPase is a heteromultimeric enzyme made up of two complexes: the ATP-hydrolytic V1 complex and the proton translocation V0 complex. The V1 complex consists of three catalytic AB heterodimers that form a heterohexamer, three peripheral stalks each consisting of EG heterodimers, one central rotor including subunits D and F, and the regulatory subunits C and H. The proton translocation complex V0 consists of the proton transport subunit a, a ring of proteolipid subunits c9c'', rotary subunit d, subunits e and f, and the accessory subunits VhaAC45 and ATP6AP2. In terms of tissue distribution, in larvae, expressed in the ring gland, CNS, imaginal disks and lymph gland.

Its function is as follows. Subunit of the V1 complex of vacuolar(H+)-ATPase (V-ATPase), a multisubunit enzyme composed of a peripheral complex (V1) that hydrolyzes ATP and a membrane integral complex (V0) that translocates protons. V-ATPase is responsible for acidifying and maintaining the pH of intracellular compartments and in some cell types, is targeted to the plasma membrane, where it is responsible for acidifying the extracellular environment. Subunit C is necessary for the assembly of the catalytic sector of the enzyme and is likely to have a specific function in its catalytic activity. In enterocytes, acts as part of a pHCl-2 sensory pathway which mediates Tor-dependent larval growth and metabolism in response to zinc availability. Likely acts in maintaining enterocyte lysosomal acidification which consequently promotes Tor activation at the lysosome membrane. In Drosophila melanogaster (Fruit fly), this protein is V-type proton ATPase subunit C (Vha44).